We begin with the raw amino-acid sequence, 270 residues long: 4-hydroxy-tetrahydrodipicolinate reductase (270 aa).

NAD(+) contacts are provided by residues 8 to 13 and Glu34; that span reads GAAGRM. Residue Arg35 coordinates NADP(+). Residues 98–100 and 122–125 contribute to the NAD(+) site; these read GST and SPNM. His155 serves as the catalytic Proton donor/acceptor. His156 contributes to the (S)-2,3,4,5-tetrahydrodipicolinate binding site. Catalysis depends on Lys159, which acts as the Proton donor. Position 165 to 166 (165 to 166) interacts with (S)-2,3,4,5-tetrahydrodipicolinate; that stretch reads GT.

This sequence belongs to the DapB family.

Its subcellular location is the cytoplasm. It carries out the reaction (S)-2,3,4,5-tetrahydrodipicolinate + NAD(+) + H2O = (2S,4S)-4-hydroxy-2,3,4,5-tetrahydrodipicolinate + NADH + H(+). The catalysed reaction is (S)-2,3,4,5-tetrahydrodipicolinate + NADP(+) + H2O = (2S,4S)-4-hydroxy-2,3,4,5-tetrahydrodipicolinate + NADPH + H(+). The protein operates within amino-acid biosynthesis; L-lysine biosynthesis via DAP pathway; (S)-tetrahydrodipicolinate from L-aspartate: step 4/4. Its function is as follows. Catalyzes the conversion of 4-hydroxy-tetrahydrodipicolinate (HTPA) to tetrahydrodipicolinate. The polypeptide is 4-hydroxy-tetrahydrodipicolinate reductase (Anaeromyxobacter dehalogenans (strain 2CP-C)).